The chain runs to 306 residues: Large ribosomal subunit protein uL2m (306 aa).

The transit peptide at Met-1–Ser-60 directs the protein to the mitochondrion.

This sequence belongs to the universal ribosomal protein uL2 family. In terms of assembly, component of the mitochondrial ribosome large subunit (39S) which comprises a 16S rRNA and about 50 distinct proteins.

It localises to the mitochondrion. This Mus musculus (Mouse) protein is Large ribosomal subunit protein uL2m (Mrpl2).